The chain runs to 372 residues: Queuine tRNA-ribosyltransferase (372 aa).

The Proton acceptor role is filled by Asp93. Substrate is bound by residues 93–97 (DSGGF), Asp147, Gln190, and Gly217. The segment at 248 to 254 (GVGSPDC) is RNA binding. Asp267 functions as the Nucleophile in the catalytic mechanism. The RNA binding; important for wobble base 34 recognition stretch occupies residues 272–276 (TRMAR). The Zn(2+) site is built by Cys305, Cys307, Cys310, and His336.

The protein belongs to the queuine tRNA-ribosyltransferase family. As to quaternary structure, homodimer. Within each dimer, one monomer is responsible for RNA recognition and catalysis, while the other monomer binds to the replacement base PreQ1. It depends on Zn(2+) as a cofactor.

It catalyses the reaction 7-aminomethyl-7-carbaguanine + guanosine(34) in tRNA = 7-aminomethyl-7-carbaguanosine(34) in tRNA + guanine. Its pathway is tRNA modification; tRNA-queuosine biosynthesis. Functionally, catalyzes the base-exchange of a guanine (G) residue with the queuine precursor 7-aminomethyl-7-deazaguanine (PreQ1) at position 34 (anticodon wobble position) in tRNAs with GU(N) anticodons (tRNA-Asp, -Asn, -His and -Tyr). Catalysis occurs through a double-displacement mechanism. The nucleophile active site attacks the C1' of nucleotide 34 to detach the guanine base from the RNA, forming a covalent enzyme-RNA intermediate. The proton acceptor active site deprotonates the incoming PreQ1, allowing a nucleophilic attack on the C1' of the ribose to form the product. After dissociation, two additional enzymatic reactions on the tRNA convert PreQ1 to queuine (Q), resulting in the hypermodified nucleoside queuosine (7-(((4,5-cis-dihydroxy-2-cyclopenten-1-yl)amino)methyl)-7-deazaguanosine). The sequence is that of Queuine tRNA-ribosyltransferase from Desulforudis audaxviator (strain MP104C).